Consider the following 315-residue polypeptide: Calumenin (315 aa).

A signal peptide spans methionine 1 to serine 19. Position 47 is a phosphotyrosine (tyrosine 47). Threonine 65 carries the phosphothreonine modification. 6 consecutive EF-hand domains span residues glutamate 68–arginine 103, tryptophan 104–aspartate 139, glutamine 151–aspartate 186, methionine 188–asparagine 223, tryptophan 229–aspartate 264, and histidine 265–serine 300. Serine 69 bears the Phosphoserine mark. Ca(2+) is bound by residues aspartate 81, aspartate 83, aspartate 85, glutamate 92, aspartate 117, asparagine 119, aspartate 121, and glutamate 128. Residue asparagine 131 is glycosylated (N-linked (GlcNAc...) asparagine). Aspartate 164 contributes to the Ca(2+) binding site. Lysine 165 bears the N6-acetyllysine mark. Positions 166, 168, 175, 201, 203, 205, 212, 242, 244, 246, 248, and 253 each coordinate Ca(2+). Position 254 is a phosphothreonine (threonine 254). Residues serine 261 and serine 277 each carry the phosphoserine modification. Ca(2+) contacts are provided by aspartate 278, asparagine 280, aspartate 282, lysine 284, and glutamate 289. Residues histidine 312–phenylalanine 315 carry the Prevents secretion from ER motif.

The protein belongs to the CREC family. In terms of assembly, interacts with GGCX.

The protein resides in the endoplasmic reticulum membrane. The protein localises to the golgi apparatus. It localises to the secreted. It is found in the melanosome. Its subcellular location is the sarcoplasmic reticulum lumen. Its function is as follows. Involved in regulation of vitamin K-dependent carboxylation of multiple N-terminal glutamate residues. Seems to inhibit gamma-carboxylase GGCX. Binds 7 calcium ions with a low affinity. In Mesocricetus auratus (Golden hamster), this protein is Calumenin (CALU).